Reading from the N-terminus, the 197-residue chain is Putative peptidyl-prolyl cis-trans isomerase (197 aa).

Positions 14–195 (NEIKVVMHTN…YDVVIESIDV (182 aa)) constitute a PPIase cyclophilin-type domain.

It belongs to the cyclophilin-type PPIase family.

The catalysed reaction is [protein]-peptidylproline (omega=180) = [protein]-peptidylproline (omega=0). Its function is as follows. PPIases accelerate the folding of proteins. It catalyzes the cis-trans isomerization of proline imidic peptide bonds in oligopeptides. In Staphylococcus epidermidis (strain ATCC 35984 / DSM 28319 / BCRC 17069 / CCUG 31568 / BM 3577 / RP62A), this protein is Putative peptidyl-prolyl cis-trans isomerase.